The primary structure comprises 335 residues: Olfactory receptor 10R2 (335 aa).

The Extracellular portion of the chain corresponds to 1–45 (MPQILIFTYLNMFYFFPPLQILAENLTMVTEFLLLGFSSLGEIQL). Asparagine 25 is a glycosylation site (N-linked (GlcNAc...) asparagine). The helical transmembrane segment at 46 to 66 (ALFVVFLFLYLVILSGNVTII) threads the bilayer. Over 67-74 (SVIHLDKS) the chain is Cytoplasmic. A helical transmembrane segment spans residues 75-95 (LHTPMYFFLGILSTSETFYTF). The Extracellular segment spans residues 96-119 (VILPKMLINLLSVARTISFNCCAL). Residues cysteine 117 and cysteine 209 are joined by a disulfide bond. The chain crosses the membrane as a helical span at residues 120-140 (QMFFFLGFAITNCLLLGVMGY). Residues 141–159 (DRYAAICHPLHYPTLMSWQ) lie on the Cytoplasmic side of the membrane. The helical transmembrane segment at 160–180 (VCGKLAAACAIGGFLASLTVV) threads the bilayer. Over 181–217 (NLVFSLPFCSANKVNHYFCDISAVILLACTNTDVNEF) the chain is Extracellular. The chain crosses the membrane as a helical span at residues 218-237 (VIFICGVLVLVVPFLFICVS). Topologically, residues 238–257 (YLCILRTILKIPSAEGRRKA) are cytoplasmic. The chain crosses the membrane as a helical span at residues 258-278 (FSTCASHLSVVIVHYGCASFI). Over 279 to 291 (YLRPTANYVSNKD) the chain is Extracellular. The chain crosses the membrane as a helical span at residues 292 to 312 (RLVTVTYTIVTPLLNPMVYSL). Residues 313–335 (RNKDVQLAIRKVLGKKGSLKLYN) lie on the Cytoplasmic side of the membrane.

Belongs to the G-protein coupled receptor 1 family.

It localises to the cell membrane. Functionally, odorant receptor. The protein is Olfactory receptor 10R2 (OR10R2) of Homo sapiens (Human).